The primary structure comprises 346 residues: tRNA N6-adenosine threonylcarbamoyltransferase (346 aa).

Positions 117 and 121 each coordinate Fe cation. Residues 139–143 (QVSGG), aspartate 172, glycine 185, aspartate 189, and asparagine 278 contribute to the substrate site. Residue aspartate 308 participates in Fe cation binding.

It belongs to the KAE1 / TsaD family. Fe(2+) is required as a cofactor.

It localises to the cytoplasm. The enzyme catalyses L-threonylcarbamoyladenylate + adenosine(37) in tRNA = N(6)-L-threonylcarbamoyladenosine(37) in tRNA + AMP + H(+). In terms of biological role, required for the formation of a threonylcarbamoyl group on adenosine at position 37 (t(6)A37) in tRNAs that read codons beginning with adenine. Is involved in the transfer of the threonylcarbamoyl moiety of threonylcarbamoyl-AMP (TC-AMP) to the N6 group of A37, together with TsaE and TsaB. TsaD likely plays a direct catalytic role in this reaction. The protein is tRNA N6-adenosine threonylcarbamoyltransferase of Lactobacillus delbrueckii subsp. bulgaricus (strain ATCC 11842 / DSM 20081 / BCRC 10696 / JCM 1002 / NBRC 13953 / NCIMB 11778 / NCTC 12712 / WDCM 00102 / Lb 14).